Here is a 306-residue protein sequence, read N- to C-terminus: 5'-hydroxyaverantin dehydrogenase (306 aa).

NADP(+)-binding residues include S25, I27, Q48, K52, and D73. Catalysis depends on S173, which acts as the Proton donor. NADP(+)-binding residues include Y187, K191, V220, and T222. Residue Y187 is the Proton acceptor of the active site. The Lowers pKa of active site Tyr role is filled by K191.

Belongs to the short-chain dehydrogenases/reductases (SDR) family. Homodimer.

The protein resides in the cytoplasm. Its subcellular location is the cytosol. The enzyme catalyses (1'S,5'S)-5'-hydroxyaverantin + NAD(+) = (S)-5'-oxoaverantin + NADH + H(+). The catalysed reaction is (1'S,5'R)-5'-hydroxyaverantin + NAD(+) = (S)-5'-oxoaverantin + NADH + 2 H(+). It participates in mycotoxin biosynthesis. 5'-hydroxyaverantin dehydrogenase; part of the fragmented gene cluster that mediates the biosynthesis of dothistromin (DOTH), a polyketide toxin very similar in structure to the aflatoxin precursor, versicolorin B. The first step of the pathway is the conversion of acetate to norsolorinic acid (NOR) and requires the fatty acid synthase subunits hexA and hexB, as well as the polyketide synthase pksA. PksA combines a hexanoyl starter unit and 7 malonyl-CoA extender units to synthesize the precursor NOR. The hexanoyl starter unit is provided to the acyl-carrier protein (ACP) domain by the fungal fatty acid synthase hexA/hexB. The second step is the conversion of NOR to averantin (AVN) and requires the norsolorinic acid ketoreductase nor1, which catalyzes the dehydration of norsolorinic acid to form (1'S)-averantin. The cytochrome P450 monooxygenase avnA then catalyzes the hydroxylation of AVN to 5'hydroxyaverantin (HAVN). The next step is performed by adhA that transforms HAVN to averufin (AVF). Averufin might then be converted to hydroxyversicolorone by cypX and avfA. Hydroxyversicolorone is further converted versiconal hemiacetal acetate (VHA) by moxY. VHA is then the substrate for the versiconal hemiacetal acetate esterase est1 to yield versiconal (VAL). Versicolorin B synthase vbsA then converts VAL to versicolorin B (VERB) by closing the bisfuran ring. Then, the activity of the versicolorin B desaturase verB leads to versicolorin A (VERA). DotB, a predicted chloroperoxidase, may perform epoxidation of the A-ring of VERA. Alternatively, a cytochrome P450, such as cypX or avnA could catalyze this step. It is also possible that another, uncharacterized, cytochrome P450 enzyme is responsible for this step. Opening of the epoxide could potentially be achieved by the epoxide hydrolase epoA. However, epoA seems not to be required for DOTH biosynthesis, but other epoxide hydrolases may have the ability to complement this hydrolysis. Alternatively, opening of the epoxide ring could be achieved non-enzymatically. The next step is the deoxygenation of ring A to yield the 5,8-dihydroxyanthraquinone which is most likely catalyzed by the NADPH dehydrogenase encoded by ver1. The last stages of DOTH biosynthesis are proposed to involve hydroxylation of the bisfuran. OrdB and norB might have oxidative roles here. An alternative possibility is that cytochrome P450 monoogenases such as avnA and cypX might perform these steps in addition to previously proposed steps. This Dothistroma septosporum (strain NZE10 / CBS 128990) (Red band needle blight fungus) protein is 5'-hydroxyaverantin dehydrogenase.